We begin with the raw amino-acid sequence, 166 residues long: Small ribosomal subunit protein uS5 (166 aa).

An S5 DRBM domain is found at 11-74; the sequence is LQEKLIAVNR…EKARRNMINV (64 aa).

It belongs to the universal ribosomal protein uS5 family. In terms of assembly, part of the 30S ribosomal subunit. Contacts proteins S4 and S8.

In terms of biological role, with S4 and S12 plays an important role in translational accuracy. Located at the back of the 30S subunit body where it stabilizes the conformation of the head with respect to the body. This chain is Small ribosomal subunit protein uS5, found in Pasteurella multocida (strain Pm70).